Consider the following 49-residue polypeptide: MRVNITLACTECGDRNYISKKNKRNNAERIELKKYCKRDKKSTLHRETK.

The protein belongs to the bacterial ribosomal protein bL33 family.

The polypeptide is Large ribosomal subunit protein bL33B (Bacillus anthracis).